The chain runs to 161 residues: Allophycocyanin alpha chain (161 aa).

Asn-71 carries the post-translational modification N4-methylasparagine. (2R,3E)-phycocyanobilin is bound at residue Cys-81.

Belongs to the phycobiliprotein family. In terms of assembly, heterodimer of an alpha and a beta chain. In terms of processing, contains one covalently linked phycocyanobilin chromophore.

It localises to the plastid. The protein resides in the chloroplast thylakoid membrane. In terms of biological role, light-harvesting photosynthetic bile pigment-protein from the phycobiliprotein complex. Allophycocyanin has a maximum absorption at approximately 650 nanometers. In Galdieria sulphuraria (Red alga), this protein is Allophycocyanin alpha chain (apcA).